The sequence spans 252 residues: Imidazole glycerol phosphate synthase subunit HisF (252 aa).

Active-site residues include Asp11 and Asp130.

Belongs to the HisA/HisF family. In terms of assembly, heterodimer of HisH and HisF.

The protein resides in the cytoplasm. It carries out the reaction 5-[(5-phospho-1-deoxy-D-ribulos-1-ylimino)methylamino]-1-(5-phospho-beta-D-ribosyl)imidazole-4-carboxamide + L-glutamine = D-erythro-1-(imidazol-4-yl)glycerol 3-phosphate + 5-amino-1-(5-phospho-beta-D-ribosyl)imidazole-4-carboxamide + L-glutamate + H(+). It participates in amino-acid biosynthesis; L-histidine biosynthesis; L-histidine from 5-phospho-alpha-D-ribose 1-diphosphate: step 5/9. In terms of biological role, IGPS catalyzes the conversion of PRFAR and glutamine to IGP, AICAR and glutamate. The HisF subunit catalyzes the cyclization activity that produces IGP and AICAR from PRFAR using the ammonia provided by the HisH subunit. The sequence is that of Imidazole glycerol phosphate synthase subunit HisF from Petrotoga mobilis (strain DSM 10674 / SJ95).